Here is a 155-residue protein sequence, read N- to C-terminus: Deoxyuridine 5'-triphosphate nucleotidohydrolase (155 aa).

Substrate contacts are provided by residues 74-76 (RSG), Asn-87, and 91-93 (TID).

It belongs to the dUTPase family. The cofactor is Mg(2+).

It catalyses the reaction dUTP + H2O = dUMP + diphosphate + H(+). It participates in pyrimidine metabolism; dUMP biosynthesis; dUMP from dCTP (dUTP route): step 2/2. In terms of biological role, this enzyme is involved in nucleotide metabolism: it produces dUMP, the immediate precursor of thymidine nucleotides and it decreases the intracellular concentration of dUTP so that uracil cannot be incorporated into DNA. The chain is Deoxyuridine 5'-triphosphate nucleotidohydrolase from Cereibacter sphaeroides (strain KD131 / KCTC 12085) (Rhodobacter sphaeroides).